A 702-amino-acid chain; its full sequence is Polyribonucleotide nucleotidyltransferase (702 aa).

Positions 485 and 491 each coordinate Mg(2+). The KH domain occupies 552–612; that stretch reads PRTEIICIDP…EGVKKAISII (61 aa). In terms of domain architecture, S1 motif spans 622-690; sequence GEIYLGKVTK…NQGRINLSRK (69 aa).

The protein belongs to the polyribonucleotide nucleotidyltransferase family. Mg(2+) serves as cofactor.

The protein resides in the cytoplasm. The enzyme catalyses RNA(n+1) + phosphate = RNA(n) + a ribonucleoside 5'-diphosphate. Its function is as follows. Involved in mRNA degradation. Catalyzes the phosphorolysis of single-stranded polyribonucleotides processively in the 3'- to 5'-direction. This chain is Polyribonucleotide nucleotidyltransferase, found in Clostridium botulinum (strain Loch Maree / Type A3).